The primary structure comprises 1327 residues: Polarized growth protein L1 (1327 aa).

An N-terminal signal peptide occupies residues 1-30; that stretch reads MRESFASLLATGAGKLALSLLFAATPFTSA. Residues 31–1169 are Extracellular-facing; the sequence is YTFNQVPSPN…FSQQNGKHLA (1139 aa). Asparagine 74, asparagine 90, asparagine 105, asparagine 115, asparagine 132, asparagine 170, asparagine 217, asparagine 224, asparagine 235, asparagine 318, asparagine 342, asparagine 452, asparagine 475, asparagine 601, asparagine 639, asparagine 648, and asparagine 691 each carry an N-linked (GlcNAc...) asparagine glycan. The Kelch 1 repeat unit spans residues 595–641; it reads NLYVAGNFSNNDGRNNIFSFKQGASDPTALPNRGLNRQVMTLYQNDS. Residues 699–754 form a Kelch 2 repeat; the sequence is QVLAVSGFFDSVNEFNGNPSTNVQDFAVWVPSRSNWLHNLDFFTLAMSGRLMTFAD. Residues asparagine 835, asparagine 852, asparagine 877, and asparagine 931 are each glycosylated (N-linked (GlcNAc...) asparagine). Kelch repeat units lie at residues 945 to 993 and 994 to 1040; these read DVFV…ISDT and QMYI…TIAN. N-linked (GlcNAc...) asparagine glycans are attached at residues asparagine 1000, asparagine 1006, and asparagine 1126. Residues 1170 to 1190 form a helical membrane-spanning segment; that stretch reads LWAIVLIGLAIALVLTFLLVV. Over 1191–1327 the chain is Cytoplasmic; sequence AGILLEWYRN…VFDTILACSS (137 aa).

The protein belongs to the RAX2 family.

Its subcellular location is the cell membrane. Functionally, has been identified within the cluster that mediates the biosynthesis of squalestatin, but as its expression does not follow that of the other cluster members and it is not conserved in close related clusters, L1 seems not to be involved in the biosynthesis of squalestatin. Probably plays a role as a cell polarity regulator. The protein is Polarized growth protein L1 of Phoma sp. (strain ATCC 20986 / MF5453).